A 582-amino-acid polypeptide reads, in one-letter code: V-type ATP synthase alpha chain (582 aa).

Position 231–238 (231–238 (GPFGSGKT)) interacts with ATP.

The protein belongs to the ATPase alpha/beta chains family.

The enzyme catalyses ATP + H2O + 4 H(+)(in) = ADP + phosphate + 5 H(+)(out). Functionally, produces ATP from ADP in the presence of a proton gradient across the membrane. The V-type alpha chain is a catalytic subunit. This Deinococcus deserti (strain DSM 17065 / CIP 109153 / LMG 22923 / VCD115) protein is V-type ATP synthase alpha chain.